We begin with the raw amino-acid sequence, 397 residues long: Succinate--CoA ligase [ADP-forming] subunit beta (397 aa).

Residues 9–254 (KALLRQYGAP…ETEEDPKELA (246 aa)) form the ATP-grasp domain. Residues K46, 53-55 (GRG), E109, S112, and E117 each bind ATP. Mg(2+) is bound by residues N209 and D223. Residues N274 and 331–333 (GIM) contribute to the substrate site.

It belongs to the succinate/malate CoA ligase beta subunit family. Heterotetramer of two alpha and two beta subunits. Requires Mg(2+) as cofactor.

The enzyme catalyses succinate + ATP + CoA = succinyl-CoA + ADP + phosphate. It carries out the reaction GTP + succinate + CoA = succinyl-CoA + GDP + phosphate. It functions in the pathway carbohydrate metabolism; tricarboxylic acid cycle; succinate from succinyl-CoA (ligase route): step 1/1. Its function is as follows. Succinyl-CoA synthetase functions in the citric acid cycle (TCA), coupling the hydrolysis of succinyl-CoA to the synthesis of either ATP or GTP and thus represents the only step of substrate-level phosphorylation in the TCA. The beta subunit provides nucleotide specificity of the enzyme and binds the substrate succinate, while the binding sites for coenzyme A and phosphate are found in the alpha subunit. This chain is Succinate--CoA ligase [ADP-forming] subunit beta, found in Paracoccus denitrificans (strain Pd 1222).